A 480-amino-acid polypeptide reads, in one-letter code: UDP-N-acetylmuramate--L-alanine ligase (480 aa).

115 to 121 lines the ATP pocket; the sequence is GTHGKTT.

This sequence belongs to the MurCDEF family.

The protein resides in the cytoplasm. It catalyses the reaction UDP-N-acetyl-alpha-D-muramate + L-alanine + ATP = UDP-N-acetyl-alpha-D-muramoyl-L-alanine + ADP + phosphate + H(+). It functions in the pathway cell wall biogenesis; peptidoglycan biosynthesis. In terms of biological role, cell wall formation. This chain is UDP-N-acetylmuramate--L-alanine ligase, found in Gluconacetobacter diazotrophicus (strain ATCC 49037 / DSM 5601 / CCUG 37298 / CIP 103539 / LMG 7603 / PAl5).